Here is a 228-residue protein sequence, read N- to C-terminus: Ribosomal RNA small subunit methyltransferase G (228 aa).

Residues Gly-89, Leu-94, 140–141, and Arg-159 contribute to the S-adenosyl-L-methionine site; that span reads VE.

This sequence belongs to the methyltransferase superfamily. RNA methyltransferase RsmG family.

It is found in the cytoplasm. It catalyses the reaction guanosine(527) in 16S rRNA + S-adenosyl-L-methionine = N(7)-methylguanosine(527) in 16S rRNA + S-adenosyl-L-homocysteine. Its function is as follows. Specifically methylates the N7 position of guanine in position 527 of 16S rRNA. The chain is Ribosomal RNA small subunit methyltransferase G from Burkholderia ambifaria (strain ATCC BAA-244 / DSM 16087 / CCUG 44356 / LMG 19182 / AMMD) (Burkholderia cepacia (strain AMMD)).